Here is a 163-residue protein sequence, read N- to C-terminus: I-Kappa-B like protein N3 (163 aa).

ANK repeat units lie at residues 62–95 (LGDTCIHVAALANRGKQAIQLIEKLVEYGANLNT) and 100–130 (NGDTVLDIAVKNKDHELTVWLWKQPSINLQT).

This sequence belongs to the polydnaviridae I-Kappa-B like protein family.

In terms of biological role, suppresses the host immune response through NF-kappa-B inactivation. Possesses ankyrin repeat domains required for NF-kappa-B binding but lacks the regulatory regions required for dissociation from NF-kappa-B and degradation. Therefore, prevents host NF-kappa-B release and subsequent activation. The sequence is that of I-Kappa-B like protein N3 (N6) from Microplitis demolitor (Parasitoid wasp).